The primary structure comprises 418 residues: Enolase 1 (418 aa).

Glutamine 162 is a binding site for (2R)-2-phosphoglycerate. Glutamate 204 (proton donor) is an active-site residue. Residues aspartate 241, glutamate 285, and aspartate 312 each coordinate Mg(2+). Lysine 337, arginine 366, serine 367, and lysine 388 together coordinate (2R)-2-phosphoglycerate. Catalysis depends on lysine 337, which acts as the Proton acceptor.

The protein belongs to the enolase family. The cofactor is Mg(2+).

It is found in the cytoplasm. It localises to the secreted. Its subcellular location is the cell surface. It catalyses the reaction (2R)-2-phosphoglycerate = phosphoenolpyruvate + H2O. The protein operates within carbohydrate degradation; glycolysis; pyruvate from D-glyceraldehyde 3-phosphate: step 4/5. Functionally, catalyzes the reversible conversion of 2-phosphoglycerate (2-PG) into phosphoenolpyruvate (PEP). It is essential for the degradation of carbohydrates via glycolysis. This chain is Enolase 1, found in Lactococcus lactis subsp. cremoris (strain SK11).